The sequence spans 261 residues: Glucose 1-dehydrogenase A (261 aa).

An NADP(+)-binding site is contributed by 11–35; sequence VITGGSTGLGRAMAVRFGQEEAKVV. Ser145 serves as a coordination point for substrate. The Proton acceptor role is filled by Tyr158.

This sequence belongs to the short-chain dehydrogenases/reductases (SDR) family. Homotetramer.

The enzyme catalyses D-glucose + NAD(+) = D-glucono-1,5-lactone + NADH + H(+). It catalyses the reaction D-glucose + NADP(+) = D-glucono-1,5-lactone + NADPH + H(+). This Priestia megaterium (Bacillus megaterium) protein is Glucose 1-dehydrogenase A (gdhA).